We begin with the raw amino-acid sequence, 118 residues long: Large ribosomal subunit protein uL18 (118 aa).

This sequence belongs to the universal ribosomal protein uL18 family. Part of the 50S ribosomal subunit; part of the 5S rRNA/L5/L18/L25 subcomplex. Contacts the 5S and 23S rRNAs.

In terms of biological role, this is one of the proteins that bind and probably mediate the attachment of the 5S RNA into the large ribosomal subunit, where it forms part of the central protuberance. The sequence is that of Large ribosomal subunit protein uL18 from Limosilactobacillus reuteri (strain DSM 20016) (Lactobacillus reuteri).